The sequence spans 819 residues: FYN-binding protein 1 (819 aa).

A compositionally biased stretch (polar residues) spans 1–45; that stretch reads MAKFNTGSNPTEEAATSSRPFKVAGQSSPSGIQSRKNLFDNQGNA. Positions 1-490 are disordered; sequence MAKFNTGSNP…REKKEQELKK (490 aa). The residue at position 3 (Lys-3) is an N6-acetyllysine. 2 positions are modified to phosphoserine: Ser-28 and Ser-46. Basic and acidic residues predominate over residues 69–79; that stretch reads TYEEKPEKEPK. Pro residues predominate over residues 150 to 160; sequence GPKPGPAPPVP. Ser-222 is subject to Phosphoserine. Composition is skewed to basic and acidic residues over residues 237–248 and 273–285; these read PPKEDPEDKDHG and NFEEKKEDRKTDL. A Phosphoserine modification is found at Ser-318. Composition is skewed to pro residues over residues 342–351 and 380–412; these read GPPPPKPNRP and LPPPPPTHPASQPPLPASHPAHPPVPSLPPRNI. The span at 439–453 shows a compositional bias: acidic residues; sequence LEEEQESEGETYEDI. A Phosphoserine modification is found at Ser-445. Residues 448–495 adopt a coiled-coil conformation; that stretch reads ETYEDIDSSKERDKKREKEEKKRLELERKEQKEREKKEQELKKKFKLT. A compositionally biased stretch (basic and acidic residues) spans 454–489; that stretch reads DSSKERDKKREKEEKKRLELERKEQKEREKKEQELK. The short motif at 479–493 is the Nuclear localization signal element; sequence KEREKKEQELKKKFK. One can recognise an SH3 1 domain in the interval 499 to 560; the sequence is QVIHHAKACC…KTTAVEIDYD (62 aa). At Tyr-559 the chain carries Phosphotyrosine. A phosphoserine mark is found at Ser-561 and Ser-568. An SH2-binding; to LCP2 motif is present at residues 584 to 587; that stretch reads YDDV. 2 disordered regions span residues 589-635 and 649-728; these read EQDA…DEKT and KDDR…EKEE. Residues 610–626 are compositionally biased toward acidic residues; that stretch reads TDDEIYDGIEEEDDDDG. The SH2-binding; to FYN motif lies at 615–618; that stretch reads YDGI. Over residues 649 to 664 the composition is skewed to basic and acidic residues; the sequence is KDDRKKSIREKPKVSE. Residues 668 to 677 are compositionally biased toward polar residues; sequence NEGSSLPSQH. Residues 682-692 show a composition bias toward acidic residues; sequence VGEEVYDDVDA. Tyr-687 is subject to Phosphotyrosine. Residues 710 to 736 carry the Nuclear localization signal motif; it reads RAKTEEKDPKKLKKQEKEEKDLRKKFK. Basic and acidic residues predominate over residues 711 to 728; it reads AKTEEKDPKKLKKQEKEE. Residues 736-804 form the SH3 2 domain; it reads KYDGEIRVLY…LRSYLVDNDG (69 aa).

In terms of assembly, part of a complex consisting of SKAP2, FYB1 and PTPNS1. Part of a complex consisting of SKAP2, FYB1 and PIRB. Part of a complex consisting of SKAP1, FYB1 and CLNK. Interacts with CLNK (via its SH2 domain); this interaction allows SKAP1 and FYB1 to recruit FYN to the complex, thus promoting the phosphorylation of CLNK by FYN. Interacts with FYN. Interacts with LCP2. Interacts with SKAP1. Interacts with SKAP2. Interacts with FASLG. Interacts with EVL. Interacts with TMEM47. Interacts with LCK. Post-translationally, T-cell receptor ligation leads to increased tyrosine phosphorylation. Expressed in hematopoietic tissues such as myeloid and T-cells, spleen and thymus. Not expressed in B-cells, nor in non-lymphoid tissues. FYB-130 is preferentially expressed in mature T-cells compared to FYB-120, whereas thymocytes showed a greater relative amount of FYB-120. Expressed in podocytes.

It is found in the cytoplasm. The protein resides in the nucleus. The protein localises to the cell junction. Functionally, acts as an adapter protein of the FYN and LCP2 signaling cascades in T-cells. May play a role in linking T-cell signaling to remodeling of the actin cytoskeleton. Modulates the expression of IL2. Involved in platelet activation. Prevents the degradation of SKAP1 and SKAP2. May be involved in high affinity immunoglobulin epsilon receptor signaling in mast cells. This is FYN-binding protein 1 (Fyb1) from Mus musculus (Mouse).